The sequence spans 174 residues: Ribosome maturation factor RimM (174 aa).

The region spanning 99–172 (ADEFFYHDVI…RLVIRPIAGL (74 aa)) is the PRC barrel domain.

Belongs to the RimM family. In terms of assembly, binds ribosomal protein uS19.

It is found in the cytoplasm. In terms of biological role, an accessory protein needed during the final step in the assembly of 30S ribosomal subunit, possibly for assembly of the head region. Essential for efficient processing of 16S rRNA. May be needed both before and after RbfA during the maturation of 16S rRNA. It has affinity for free ribosomal 30S subunits but not for 70S ribosomes. The protein is Ribosome maturation factor RimM of Chloroflexus aurantiacus (strain ATCC 29366 / DSM 635 / J-10-fl).